Here is a 332-residue protein sequence, read N- to C-terminus: Anthranilate phosphoribosyltransferase (332 aa).

Residues Gly79, 82 to 83, Thr87, 89 to 92, 107 to 115, and Ser119 each bind 5-phospho-alpha-D-ribose 1-diphosphate; these read GD, NIST, and KHGNRSVSS. Gly79 contributes to the anthranilate binding site. Ser91 is a Mg(2+) binding site. Asn110 lines the anthranilate pocket. Arg165 is a binding site for anthranilate. Residues Asp223 and Glu224 each coordinate Mg(2+).

This sequence belongs to the anthranilate phosphoribosyltransferase family. In terms of assembly, homodimer. Mg(2+) serves as cofactor.

The enzyme catalyses N-(5-phospho-beta-D-ribosyl)anthranilate + diphosphate = 5-phospho-alpha-D-ribose 1-diphosphate + anthranilate. It functions in the pathway amino-acid biosynthesis; L-tryptophan biosynthesis; L-tryptophan from chorismate: step 2/5. Functionally, catalyzes the transfer of the phosphoribosyl group of 5-phosphorylribose-1-pyrophosphate (PRPP) to anthranilate to yield N-(5'-phosphoribosyl)-anthranilate (PRA). The sequence is that of Anthranilate phosphoribosyltransferase from Vibrio vulnificus (strain YJ016).